The sequence spans 470 residues: Argininosuccinate lyase (470 aa).

Belongs to the lyase 1 family. Argininosuccinate lyase subfamily.

The protein localises to the cytoplasm. The enzyme catalyses 2-(N(omega)-L-arginino)succinate = fumarate + L-arginine. Its pathway is amino-acid biosynthesis; L-arginine biosynthesis; L-arginine from L-ornithine and carbamoyl phosphate: step 3/3. In Ehrlichia chaffeensis (strain ATCC CRL-10679 / Arkansas), this protein is Argininosuccinate lyase.